The sequence spans 652 residues: Complement component C1q receptor (652 aa).

The N-terminal stretch at 1–21 (MATSMGLLLLLLLLLTQPGAG) is a signal peptide. The Extracellular segment spans residues 24 to 580 (ADTEAVVCVG…QNNDGTDGQK (557 aa)). The 143-residue stretch at 32–174 (VGTACYTAHS…CGSPGSPGSN (143 aa)) folds into the C-type lectin domain. Cystine bridges form between Cys141–Cys165, Cys264–Cys275, Cys271–Cys285, Cys287–Cys300, Cys306–Cys317, Cys311–Cys328, Cys330–Cys343, Cys349–Cys358, Cys354–Cys367, Cys369–Cys383, Cys389–Cys400, Cys396–Cys409, Cys411–Cys425, Cys431–Cys443, Cys439–Cys452, and Cys454–Cys467. EGF-like domains are found at residues 260–301 (PKYG…VTCA) and 302–344 (SRNP…LDCV). Residue Asn325 is glycosylated (N-linked (GlcNAc...) asparagine). The EGF-like 3; calcium-binding domain maps to 345 to 384 (DVDECQDSPCAQECVNTPGGFRCECWVGYEPGGPGEGACQ). In terms of domain architecture, EGF-like 4; calcium-binding spans 385 to 426 (DVDECALGRSPCAQGCTNTDGSFHCSCEEGYVLAGEDGTQCQ). An EGF-like 5; calcium-binding domain is found at 427 to 468 (DVDECVGPGGPLCDSLCFNTQGSFHCGCLPGWVLAPNGVSCT). Disordered regions lie at residues 472–546 (VSLG…VWRE) and 553–572 (TAAS…ATQN). A compositionally biased stretch (polar residues) spans 512–526 (ATPTTSRPSLSSDAP). Residues 581–601 (LLLFYILGTVVAILLLLALAL) form a helical membrane-spanning segment. Residues 602–652 (GLLVYRKRRAKREEKKEKKPQNAADSYSWVPERAESRAMENQYSPTPGTDC) lie on the Cytoplasmic side of the membrane. The interval 611–652 (AKREEKKEKKPQNAADSYSWVPERAESRAMENQYSPTPGTDC) is disordered. Residues 612 to 621 (KREEKKEKKP) show a composition bias toward basic and acidic residues. Phosphoserine is present on Ser627. Residues Tyr628 and Tyr644 each carry the phosphotyrosine modification. Residues 640–652 (MENQYSPTPGTDC) show a composition bias toward polar residues.

Homodimer. Interacts with C1QBP; the association may represent a cell surface C1q receptor. Interacts with surfactant protein A/SFTPA1. Interacts with multimerin-2/MMRN2. Interacts with DAG1; this interaction plays an important role in endothelial cell migration. Interacts with CBL. Interacts with IGFBP7. Interacts with VEGFR2. In terms of assembly, (Microbial infection) Interacts with hepatitis virus C/HCV core protein. In terms of processing, N- and O-glycosylated. Phosphorylated on Tyr-628 and Tyr-644 by SRC; these phosphorylations promote endothelial cell adhesion and migration. As to expression, highly expressed in endothelial cells, platelets, cells of myeloid origin, such as monocytes and neutrophils. Not expressed in cells of lymphoid origin.

The protein localises to the cell membrane. Functionally, cell surface receptor that plays a role in various physiological processes including inflammation, phagocytosis, and cell adhesion. Plays a role in phagocytosis and enhances the uptake of apoptotic cells and immune complexes by acting as a receptor for defense collagens including surfactant protein A/SFTPA1, C1q, and mannose-binding lectin (MBL2). Plays a role in the regulation of endothelial cell function and adhesion by activating angiogenesis. Mechanistically, exerts its angiogenic function by associating with beta-dystroglycan, leading to SRC-dependent phosphorylation and subsequent recruitment of CBL. In turn, CBL provides a docking site for downstream signaling components, such as CRKL to enhance cell migration. Participates in angiogenesis also by acting as a receptor for the ECM pan-endothelial glycoprotein multimerin-2/MMRN2 and IGFBP7 ligands. Both ligands play a non-redundant role in CD93-mediated endothelial cell function. Acts as a key regulator of endothelial barrier function through modulating VEGFR2 function. The chain is Complement component C1q receptor (CD93) from Homo sapiens (Human).